A 337-amino-acid polypeptide reads, in one-letter code: Heat-inducible transcription repressor HrcA (337 aa).

The protein belongs to the HrcA family.

Negative regulator of class I heat shock genes (grpE-dnaK-dnaJ and groELS operons). Prevents heat-shock induction of these operons. This is Heat-inducible transcription repressor HrcA from Arthrobacter sp. (strain FB24).